The primary structure comprises 344 residues: Anthranilate phosphoribosyltransferase (344 aa).

5-phospho-alpha-D-ribose 1-diphosphate-binding positions include glycine 84, 87-88 (GD), threonine 92, 94-97 (NIST), 112-120 (KHGNRSVSS), and serine 124. An anthranilate-binding site is contributed by glycine 84. Serine 96 lines the Mg(2+) pocket. Asparagine 115 lines the anthranilate pocket. Arginine 170 contacts anthranilate. Positions 229 and 230 each coordinate Mg(2+).

The protein belongs to the anthranilate phosphoribosyltransferase family. Homodimer. Requires Mg(2+) as cofactor.

It carries out the reaction N-(5-phospho-beta-D-ribosyl)anthranilate + diphosphate = 5-phospho-alpha-D-ribose 1-diphosphate + anthranilate. Its pathway is amino-acid biosynthesis; L-tryptophan biosynthesis; L-tryptophan from chorismate: step 2/5. Functionally, catalyzes the transfer of the phosphoribosyl group of 5-phosphorylribose-1-pyrophosphate (PRPP) to anthranilate to yield N-(5'-phosphoribosyl)-anthranilate (PRA). In Xylella fastidiosa (strain M23), this protein is Anthranilate phosphoribosyltransferase.